We begin with the raw amino-acid sequence, 478 residues long: Transcript termination protein A18 (478 aa).

Positions 98-254 constitute a Helicase ATP-binding domain; that stretch reads KLSTHRPMYM…NDVVNVLKVS (157 aa). 111 to 118 provides a ligand contact to ATP; sequence LSCGFGKT. The DESH box signature appears at 204-207; sequence DESH. The Helicase C-terminal domain maps to 302 to 468; that stretch reads PRNNLIVETV…GIEGTKEEPV (167 aa).

It belongs to the helicase family. Poxviruses subfamily. Interacts with G2. Might be part of a transcription complex composed at least of G2, A18, and H5.

It localises to the virion. Functionally, DNA helicase which seems to act as a postreplicative transcription termination factor. Involved in ATP-dependent release of nascent RNA. Forms a stable complex with single-stranded DNA, and to a lesser extent RNA. The sequence is that of Transcript termination protein A18 from Rabbit fibroma virus (strain Kasza) (RFV).